Reading from the N-terminus, the 603-residue chain is NADH-ubiquinone oxidoreductase chain 5 (603 aa).

Helical transmembrane passes span 4–24, 38–58, 87–107, 122–142, 144–160, 171–191, 211–233, 241–261, 272–292, 301–320, 325–347, 370–390, 407–429, 457–477, 482–502, and 583–603; these read YTTMTTLTLTPLILPILTTLI, SIIASTFIISLFPTTMFMCLD, MTFIPVALFVTWAIMEFSLWY, LIFLITMLILVTANNLFQLFI, WEGVGIMSFLLISWWYA, AILYNRIGDIGFILALAWFLL, TPLLGFLLAAAGKSAQLGLHPWL, TPVSALLHSSTMVVAGVFLLI, LIQTLTLCLGAITTLFAAICA, IVAFSTSSQLGLMMVTIGIN, AFLHICTHAFFKAMLFMCSGSII, STSLIIGSLALAGMPFLTGFY, WALSITLIATSLTSAYSTRMILL, LTIGSLFAGFFITNNILPMST, IPLYLKLTALSVTFLGLLTAL, and MIKLYFLSFLFPLILTLLLIM.

The protein belongs to the complex I subunit 5 family. As to quaternary structure, core subunit of respiratory chain NADH dehydrogenase (Complex I) which is composed of 45 different subunits.

It localises to the mitochondrion inner membrane. It carries out the reaction a ubiquinone + NADH + 5 H(+)(in) = a ubiquinol + NAD(+) + 4 H(+)(out). Functionally, core subunit of the mitochondrial membrane respiratory chain NADH dehydrogenase (Complex I) which catalyzes electron transfer from NADH through the respiratory chain, using ubiquinone as an electron acceptor. Essential for the catalytic activity and assembly of complex I. This is NADH-ubiquinone oxidoreductase chain 5 (MT-ND5) from Pan paniscus (Pygmy chimpanzee).